A 46-amino-acid polypeptide reads, in one-letter code: Large ribosomal subunit protein bL34 (46 aa).

Over residues 1–17 (MTKRTLRGSVRKKKRTS) the composition is skewed to basic residues. Residues 1 to 26 (MTKRTLRGSVRKKKRTSGFRARMETP) are disordered.

This sequence belongs to the bacterial ribosomal protein bL34 family.

The chain is Large ribosomal subunit protein bL34 (rpmH) from Pseudanabaena sp. (strain PCC 6903).